Consider the following 874-residue polypeptide: Leucine--tRNA ligase (874 aa).

The 'HIGH' region signature appears at 47–57; it reads PYPSGKLHMGH. Positions 636-640 match the 'KMSKS' region motif; that stretch reads KMSKS. K639 is an ATP binding site.

It belongs to the class-I aminoacyl-tRNA synthetase family.

It localises to the cytoplasm. The catalysed reaction is tRNA(Leu) + L-leucine + ATP = L-leucyl-tRNA(Leu) + AMP + diphosphate. The polypeptide is Leucine--tRNA ligase (Acinetobacter baumannii (strain AB307-0294)).